A 549-amino-acid polypeptide reads, in one-letter code: Cation/acetate symporter ActP (549 aa).

Helical transmembrane passes span 32 to 54, 75 to 97, 102 to 124, 145 to 167, 182 to 204, 211 to 233, 263 to 285, 298 to 320, 361 to 383, 404 to 423, 428 to 450, 462 to 484, and 494 to 516; these read IQAIIMFVLFVGFTLYITYWASK, GMAIAGDFMSAASFLGISALVYT, GLIYSIGFLIGWPIILFLIAERL, IRILSAIGSLFVVALYLIAQMVG, VAVVLVGILMVLYVLFGGMLATT, AILLLAGATFMALMVMKIVNFNF, ALSLGLALMFGTAGLPHIIMRFF, FYATGFIGYFYILTFIIGFGAIL, AVAFATILAVVAGLTLAGASAVS, VSKITVVILGFIAIGLGILF, IAFMVGLAFSIAASCNFPIILLS, LVGGWLGLITAVVLMILGPTIWV, and YPYEYPALFSMIIAFIGSWLFSI.

It belongs to the sodium:solute symporter (SSF) (TC 2.A.21) family.

Its subcellular location is the cell inner membrane. Transports acetate. The protein is Cation/acetate symporter ActP of Photorhabdus laumondii subsp. laumondii (strain DSM 15139 / CIP 105565 / TT01) (Photorhabdus luminescens subsp. laumondii).